Reading from the N-terminus, the 87-residue chain is MSAPDILKDFKGSLTIEQDGSISSASGILQESFYNNKEFASTIISMLHDVNKITSSNNQEFKRMTVSFSEQTFIVTAIGTKIYVVVQ.

Belongs to the LAMTOR4 family. Part of the Ragulator complex.

It is found in the lysosome. Regulator of the TOR pathway, a signaling cascade that promotes cell growth in response to growth factors, energy levels, and amino acids. As part of the Ragulator complex, may activate the TOR signaling cascade in response to amino acids. The sequence is that of Ragulator complex protein LAMTOR4 homolog from Dictyostelium discoideum (Social amoeba).